The primary structure comprises 365 residues: Putrescine 2-hydroxylase (365 aa).

Residues 44–141 (GHELMVPEVG…LQNWNGLLFE (98 aa)) enclose the Rieske domain. [2Fe-2S] cluster contacts are provided by Cys-81, His-83, Cys-100, and His-103.

It belongs to the bacterial ring-hydroxylating dioxygenase alpha subunit family. Requires [2Fe-2S] cluster as cofactor.

Rieske-type iron sulfur protein that can catalyze in vitro the 2-hydroxylation of putrescine, forming 2-hydroxyputrescine. May be involved in the biosynthesis of the cyclic hydroxamate siderophore alcaligin. This chain is Putrescine 2-hydroxylase, found in Ralstonia nicotianae (strain ATCC BAA-1114 / GMI1000) (Ralstonia solanacearum).